Consider the following 270-residue polypeptide: Short chain dehydrogenase/reductase dpfgG (270 aa).

Residues isoleucine 18, aspartate 69, asparagine 96, lysine 130, lysine 171, isoleucine 200, and asparagine 204 each coordinate NADP(+). The active-site Lowers pKa of active site Tyr is the lysine 171.

It belongs to the short-chain dehydrogenases/reductases (SDR) family.

Its pathway is secondary metabolite biosynthesis; terpenoid biosynthesis. Functionally, short chain dehydrogenase/reductase; part of the gene cluster that mediates the biosynthesis of diterpenoid pyrones. The first step of the pathway is the synthesis of the alpha-pyrone moiety by the polyketide synthase dpfgA via condensation of one acetyl-CoA starter unit with 3 malonyl-CoA units and 2 methylations. The alpha-pyrone is then combined with geranylgeranyl pyrophosphate (GGPP) formed by the GGPP synthase dpfgD through the action of the prenyltransferase dpfgC to yield a linear alpha-pyrone diterpenoid. Subsequent steps in the diterpenoid pyrone biosynthetic pathway involve the decalin core formation, which is initiated by the epoxidation of the C10-C11 olefin by the FAD-dependent oxidoreductase dpfgE, and is followed by a cyclization cascade catalyzed by the terpene cyclase dpfgB. The short chain dehydrogenase/reductase dpfgG then oxidizes the 8S hydroxy group to a ketone and the short chain dehydrogenase/reductase dpfgH reduces the ketone to the 8R hydroxy group to yield higginsianin B. Higginsianin B is further methylated by the methyltransferase dpfgI to produce the intermediate named FDDP B. The cytochrome P450 monooxygenase dfgpJ then catalyzes a three-step oxidation at C-27 to generate a carboxylic acid as well as C-26 hydroxylation. Finally, methyltransferase dpfgK methylates the carboxylic acid generated by dpfgJ, yielding the final diterpenoid pyrones from the pathway which were named FDDP D and FDDP E. This is Short chain dehydrogenase/reductase dpfgG from Gibberella zeae (strain ATCC MYA-4620 / CBS 123657 / FGSC 9075 / NRRL 31084 / PH-1) (Wheat head blight fungus).